Here is a 539-residue protein sequence, read N- to C-terminus: MAAKEVKFASDARDRMLRGVDTLANAVKVTLGPKGRNVVIEKSFGAPRITKDGVTVAKEIELKDKFENMGAQMLREVASKQNDKAGDGTTTATVLAQAIVREGAKAVAAGMNPIDLKRGIDLAVGTVVKDLESHAKKVSANSEIAQVATISANGDETVGRFLAEAMDKVGNEGVITVEEAKSLETELETVEGMQFDRGYLSPYFVTNTEKLKVELEDPYILIHEKKLSNLQALIPLLEQVVQSGKPLLIIAEDVEGEALATLVVNKLRGGLKVAAVKAPGFGDRRKAMLEDVAILTAGNVVSEELGTKLENVTIGMLGRAKKVIIDKDNTTIVDGAGNKADIDARVSQIRAQIETTTSDYDREKLQERVAKLAGGVAVIRVGGATEVEVKERKDRVDDALHATRAAVEEGILPGGGIALLRALKSLDGLKAANDDQQSGIDIVRRALRAPARQIAENAGEDGAYIVGKLLEGDDYNHGFNAATGEYEDLVKSGVIDPAKVVRTALQDAASVASLLITTEALVAELPKEDTPAPMPAMDF.

Residues 30–33 (TLGP), Lys-51, 87–91 (DGTTT), Gly-415, 480–482 (NAA), and Asp-496 each bind ATP.

The protein belongs to the chaperonin (HSP60) family. In terms of assembly, forms a cylinder of 14 subunits composed of two heptameric rings stacked back-to-back. Interacts with the co-chaperonin GroES.

It is found in the cytoplasm. The enzyme catalyses ATP + H2O + a folded polypeptide = ADP + phosphate + an unfolded polypeptide.. Functionally, together with its co-chaperonin GroES, plays an essential role in assisting protein folding. The GroEL-GroES system forms a nano-cage that allows encapsulation of the non-native substrate proteins and provides a physical environment optimized to promote and accelerate protein folding. This Erythrobacter litoralis (strain HTCC2594) protein is Chaperonin GroEL 1.